A 718-amino-acid polypeptide reads, in one-letter code: Cyclomaltodextrin glucanotransferase (718 aa).

The first 34 residues, 1 to 34 (MFQMAKRAFLSTTLTLGLLAGSALPFLPASAVYA), serve as a signal peptide directing secretion. An A1 region spans residues 35 to 172 (DPDTAVTNKQ…GIKIVIDFAP (138 aa)). Asp61, Asn63, Asn66, and Asn67 together coordinate Ca(2+). A disulfide bond links Cys77 and Cys84. The Ca(2+) site is built by Gly85 and Asp87. A substrate-binding site is contributed by 134-135 (YW). Asn173 is a binding site for Ca(2+). Positions 173-236 (NHTSPAMETD…NLYDLADFNH (64 aa)) are b. Residue His174 coordinates substrate. Residue Ile224 coordinates Ca(2+). Substrate-binding positions include 227-230 (NLYD) and Asp230. Ca(2+) is bound at residue Asp233. The A2 stretch occupies residues 237–440 (NNATIDKYFK…LRKSNPAIAY (204 aa)). Residue Arg261 participates in substrate binding. Asp263 (nucleophile) is an active-site residue. Residues 266 to 267 (KH) and His267 each bind substrate. Residue His267 participates in Ca(2+) binding. The active-site Proton donor is Glu291. Substrate contacts are provided by His361, Asp405, and Arg409. Residues 441–528 (GSTQQRWINN…ATAVWQYTTA (88 aa)) are c. The interval 529–614 (ETTPTIGHVG…SNAYNNFTIL (86 aa)) is d. An IPT/TIG domain is found at 532 to 612 (PTIGHVGPVM…VNSNAYNNFT (81 aa)). The 106-residue stretch at 613–718 (ILTGDQVTVR…GTATVTVNWQ (106 aa)) folds into the CBM20 domain. The interval 615–718 (TGDQVTVRFV…GTATVTVNWQ (104 aa)) is e.

It belongs to the glycosyl hydrolase 13 family. As to quaternary structure, monomer. The cofactor is Ca(2+).

It localises to the secreted. The catalysed reaction is Cyclizes part of a (1-&gt;4)-alpha-D-glucan chain by formation of a (1-&gt;4)-alpha-D-glucosidic bond.. The protein is Cyclomaltodextrin glucanotransferase of Niallia circulans (Bacillus circulans).